We begin with the raw amino-acid sequence, 205 residues long: Putative glutamine amidotransferase-like protein L716 (205 aa).

In terms of domain architecture, Glutamine amidotransferase type-1 spans 1 to 176 (MLLIIQNGYI…SNHIESYDYA (176 aa)). Active-site for GATase activity residues include cysteine 82, histidine 155, and aspartate 157.

The polypeptide is Putative glutamine amidotransferase-like protein L716 (Acanthamoeba polyphaga mimivirus (APMV)).